We begin with the raw amino-acid sequence, 152 residues long: Transcriptional regulator MraZ (152 aa).

2 consecutive SpoVT-AbrB domains span residues 5–52 (ASAI…PLDE) and 81–124 (AHEC…DETA).

Belongs to the MraZ family. In terms of assembly, forms oligomers.

It is found in the cytoplasm. Its subcellular location is the nucleoid. In Shewanella woodyi (strain ATCC 51908 / MS32), this protein is Transcriptional regulator MraZ.